A 601-amino-acid polypeptide reads, in one-letter code: Polypeptide N-acetylgalactosaminyltransferase 11 (601 aa).

The Cytoplasmic portion of the chain corresponds to 1 to 7; sequence MGSAALR. Residues 8 to 28 form a helical; Signal-anchor for type II membrane protein membrane-spanning segment; it reads CFCYGCLFTSVTWTLLLFIYF. Residues asparagine 29 and asparagine 202 are each glycosylated (N-linked (GlcNAc...) asparagine). At 29-601 the chain is on the lumenal side; the sequence is NFSEESQGFR…SPSQQWHLEN (573 aa). Residues 143–254 are catalytic subdomain A; the sequence is LPMASIVICF…EMWLQPLLAP (112 aa). The catalytic subdomain B stretch occupies residues 312–374; that stretch reads PFRSPTMAGG…PCSRVGHIFR (63 aa). Residues 469 to 600 enclose the Ricin B-type lectin domain; the sequence is RPKILQRGRL…GSPSQQWHLE (132 aa). A disulfide bridge connects residues cysteine 486 and cysteine 505. N-linked (GlcNAc...) asparagine glycosylation occurs at asparagine 508. Disulfide bonds link cysteine 529–cysteine 546 and cysteine 571–cysteine 589.

It belongs to the glycosyltransferase 2 family. GalNAc-T subfamily. As to quaternary structure, interacts with notch1. The cofactor is Mn(2+). It depends on Ca(2+) as a cofactor.

It is found in the golgi apparatus membrane. The enzyme catalyses L-seryl-[protein] + UDP-N-acetyl-alpha-D-galactosamine = a 3-O-[N-acetyl-alpha-D-galactosaminyl]-L-seryl-[protein] + UDP + H(+). The catalysed reaction is L-threonyl-[protein] + UDP-N-acetyl-alpha-D-galactosamine = a 3-O-[N-acetyl-alpha-D-galactosaminyl]-L-threonyl-[protein] + UDP + H(+). The protein operates within protein modification; protein glycosylation. Polypeptide N-acetylgalactosaminyltransferase that catalyzes the initiation of protein O-linked glycosylation and is involved in left/right asymmetry by mediating O-glycosylation of NOTCH1. O-glycosylation of NOTCH1 promotes activation of NOTCH1, modulating the balance between motile and immotile (sensory) cilia at the left-right organiser (LRO). Polypeptide N-acetylgalactosaminyltransferases catalyze the transfer of an N-acetyl-D-galactosamine residue to a serine or threonine residue on the protein receptor. This chain is Polypeptide N-acetylgalactosaminyltransferase 11 (galnt11), found in Xenopus tropicalis (Western clawed frog).